Here is a 612-residue protein sequence, read N- to C-terminus: DNA mismatch repair protein MutL (612 aa).

Belongs to the DNA mismatch repair MutL/HexB family.

Functionally, this protein is involved in the repair of mismatches in DNA. It is required for dam-dependent methyl-directed DNA mismatch repair. May act as a 'molecular matchmaker', a protein that promotes the formation of a stable complex between two or more DNA-binding proteins in an ATP-dependent manner without itself being part of a final effector complex. This is DNA mismatch repair protein MutL from Herminiimonas arsenicoxydans.